The primary structure comprises 758 residues: Spastin (758 aa).

The segment at 1–99 (MVRTKNQSSS…PTTCSPRSGH (99 aa)) is disordered. The Cytoplasmic segment spans residues 1–121 (MVRTKNQSSS…KQNLYVVSFP (121 aa)). Positions 1–210 (MVRTKNQSSS…RPIQPLEMAA (210 aa)) are required for localization to punctate cytoplasmic foci. 4 stretches are compositionally biased toward low complexity: residues 8-29 (SSSSSASSSSTKSPIKSSSATG), 43-58 (RSSSASNVAAVVAGGS), 66-76 (SSNRRSPGSSP), and 85-95 (TDDLTPTTCSP). The segment at residues 122 to 142 (IIFLFNVLRSLIYQLFCIFRY) is an intramembrane region (helical). At 143–758 (LYGASTKVIY…WSQDYGDITI (616 aa)) the chain is on the cytoplasmic side. 2 stretches are compositionally biased toward polar residues: residues 169-180 (SKEQQQSLNHPS) and 189-198 (QEQQLSNQPQ). Positions 169–221 (SKEQQQSLNHPSELNRDSDGQEQQLSNQPQRFRPIQPLEMAANRPGGGYSPGP) are disordered. Residues 208–758 (MAANRPGGGY…WSQDYGDITI (551 aa)) are sufficient for interaction with microtubules and microtubule severing. Residues 233-308 (HRRAFEYISK…SMARDRLHFL (76 aa)) form the MIT domain. Disordered regions lie at residues 353 to 376 (RVRSSGYGPKATTGAQPTASGRKL) and 390 to 454 (NKSQ…ASTP). 2 stretches are compositionally biased toward polar residues: residues 390 to 406 (NKSQTLPRNLGSKTSVG) and 425 to 454 (QFSSGRNTPPQRSRTPINNNGPSGSGASTP). The required for interaction with microtubules stretch occupies residues 443–455 (NNGPSGSGASTPV). Position 523–530 (523–530 (GPPGNGKT)) interacts with ATP.

The protein belongs to the AAA ATPase family. Spastin subfamily. As to quaternary structure, homohexamer. The homohexamer is stabilized by ATP-binding. The homohexamer may adopt a ring conformation through which microtubules pass prior to being severed. Interacts with microtubules. Interacts with atl; may be involved in microtubule dynamics.

It is found in the membrane. Its subcellular location is the cytoplasm. The protein localises to the cytoskeleton. The protein resides in the microtubule organizing center. It localises to the centrosome. It is found in the chromosome. Its subcellular location is the lipid droplet. The catalysed reaction is n ATP + n H2O + a microtubule = n ADP + n phosphate + (n+1) alpha/beta tubulin heterodimers.. In terms of biological role, ATP-dependent microtubule severing protein. Stimulates microtubule minus-end depolymerization and poleward microtubule flux in the mitotic spindle. Regulates microtubule stability in the neuromuscular junction synapse. Involved in lipid metabolism by regulating the size and distribution of lipid droplets. Involved in axon regeneration by regulating microtubule severing. The polypeptide is Spastin (Drosophila yakuba (Fruit fly)).